A 301-amino-acid chain; its full sequence is E3 ubiquitin-protein ligase DIS1 (301 aa).

Residues 53–89 form an RING-type; degenerate zinc finger; sequence CPVCLSAMYPPIHQCSNGHTLCSGCKPRVHNRCPTCR. Residues 106-166 form an SIAH-type; degenerate zinc finger; the sequence is SLELPCKYQN…LVNHLKDDHK (61 aa).

It belongs to the SINA (Seven in absentia) family. Homodimer. Interacts with NEK6. Interacts with SKIPA.

It is found in the nucleus. The protein localises to the cytoplasm. It carries out the reaction S-ubiquitinyl-[E2 ubiquitin-conjugating enzyme]-L-cysteine + [acceptor protein]-L-lysine = [E2 ubiquitin-conjugating enzyme]-L-cysteine + N(6)-ubiquitinyl-[acceptor protein]-L-lysine.. The protein operates within protein modification; protein ubiquitination. E3 ubiquitin-protein ligase that mediates ubiquitination and subsequent proteasomal degradation of target proteins. E3 ubiquitin ligases accept ubiquitin from an E2 ubiquitin-conjugating enzyme in the form of a thioester and then directly transfers the ubiquitin to targeted substrates. Plays a negative role in drought stress tolerance through transcriptional and post-translational regulation of diverse stress-related genes. Interacts with the serine/threonine-protein kinase NEK6 and promotes its degradation via the 26S proteasome-dependent pathway. This Oryza sativa subsp. japonica (Rice) protein is E3 ubiquitin-protein ligase DIS1.